An 80-amino-acid chain; its full sequence is RNA-binding protein KhpA (80 aa).

The KH domain maps to 33–80 (GRTVEVHVHPDDLGKVIGRGGRTATALRTLVAGIGGRGIRVDVVDTDQ).

It belongs to the KhpA RNA-binding protein family.

It is found in the cytoplasm. A probable RNA-binding protein. This chain is RNA-binding protein KhpA, found in Mycobacterium bovis (strain ATCC BAA-935 / AF2122/97).